The sequence spans 598 residues: NADPH-dependent diflavin oxidoreductase 1 (598 aa).

In terms of domain architecture, Flavodoxin-like spans 6 to 150 (LLVLFGSQTG…AIDPWVGDLW (145 aa)). Residues 12 to 17 (SQTGTA), 59 to 62 (ATTG), 97 to 106 (LGDSSYAKFN), and D132 each bind FMN. In terms of domain architecture, FAD-binding FR-type spans 206–448 (LQPFLAPVIT…VRPGSLVFPK (243 aa)). Residues R350, 382–385 (RAFS), and 416–419 (GLCS) contribute to the FAD site. Residues T461, 516 to 517 (SR), 522 to 526 (KVYVQ), and D559 each bind NADP(+). W597 contacts FAD.

The protein belongs to the NADPH-dependent diflavin oxidoreductase NDOR1 family. This sequence in the N-terminal section; belongs to the flavodoxin family. It in the C-terminal section; belongs to the flavoprotein pyridine nucleotide cytochrome reductase family. Interacts with CIAPIN1; as part of the cytosolic iron-sulfur (Fe-S) protein assembly (CIA) machinery. Interacts with DCPS. FAD is required as a cofactor. The cofactor is FMN.

Its subcellular location is the cytoplasm. It localises to the perinuclear region. The catalysed reaction is 2 oxidized [2Fe-2S]-[protein] + NADPH = 2 reduced [2Fe-2S]-[protein] + NADP(+) + H(+). Functionally, NADPH-dependent reductase which is a central component of the cytosolic iron-sulfur (Fe-S) protein assembly (CIA) machinery. Transfers electrons from NADPH via its FAD and FMN prosthetic groups to the [2Fe-2S] cluster of CIAPIN1, another key component of the CIA machinery. In turn, this reduced cluster provides electrons for assembly of cytosolic iron-sulfur cluster proteins. It can also reduce the [2Fe-2S] cluster of CISD1 and activate this protein implicated in Fe/S cluster repair. In vitro can fully activate methionine synthase/MTR in the presence of soluble cytochrome b5/CYB5A. The chain is NADPH-dependent diflavin oxidoreductase 1 from Mus musculus (Mouse).